Consider the following 870-residue polypeptide: Dynamin-2 (870 aa).

One can recognise a Dynamin-type G domain in the interval 28 to 294 (HLDLPQIAVV…LTNHIRESLP (267 aa)). The interval 38–45 (GGQSAGKS) is G1 motif. Residues Ser41, Gly43, Lys44, Ser45, Ser46, Arg59, and Gly60 each contribute to the GDP site. The interval 64-66 (VTR) is G2 motif. The segment at 136-139 (DLPG) is G3 motif. The interval 205 to 208 (TKLD) is G4 motif. GDP is bound by residues Lys206, Asp208, and Asp211. Tyr231 carries the post-translational modification Phosphotyrosine. The G5 motif stretch occupies residues 235-238 (VNRS). Positions 236, 237, and 239 each coordinate GDP. An N6-acetyllysine modification is found at Lys299. Residues 519–625 (LVIRRGWLTI…WKASFLRAGV (107 aa)) form the PH domain. The residue at position 597 (Tyr597) is a Phosphotyrosine. Lys598 carries the post-translational modification N6-acetyllysine. Residues 653-744 (VETIRNLVDS…IIGDISTSTV (92 aa)) enclose the GED domain. Residues 741 to 870 (TSTVSTPVPP…IRPAEPSLLD (130 aa)) are disordered. Position 755 is a phosphothreonine (Thr755). Residues 756–767 (WLQNTSSHSPTP) are compositionally biased toward polar residues. Phosphoserine; by CDK1 is present on Ser764. Residues 826–846 (SAPPQIPSRPARIPPGIPPGV) show a composition bias toward pro residues. The span at 847-864 (PSRRAPAAPSRPTIIRPA) shows a compositional bias: low complexity.

It belongs to the TRAFAC class dynamin-like GTPase superfamily. Dynamin/Fzo/YdjA family. Oligomerizes into a helical polymer that self-assembles around the vesicle membrane, when associated to the menbrane through lipid binding. Interacts with SHANK1 and SHANK2. Interacts with SNX9. Interacts (via C-terminal proline-rich domain (PRD)) with SNX18 (via SH3 domain); this interaction regulates ATG9A and ATG16L1 trafficking from recycling endosomes to sites of autophagosome formation. Interacts with SNX33 (via SH3 domain). Interacts with PSTPIP1 (via SH3 domain). Interacts with CTNND2. Interacts (via C-terminal proline-rich domain (PRD)) with BIN1 (via SH3 domain); this interaction allows the recruitment of DNM2 to the membrane tubules and inhibits self-assembly-stimulated GTPase activity on the membrane. Interacts with GABARAP, GABARAPL1 and GABARAPL2. Interacts with MAP1LC3B (the lipidate and non-lipidated LC3 form); this interaction mediates recycling endosome scission leading to autophagosome release. Interacts with ITSN1. Interacts with MYOF. May interact with PIK3C3. May be a component of a complex composed of RAB5A (in GDP-bound form), DYN2 and PIK3C3. Interacts with SDC4; this interaction is markedly enhanced at focal ahesion site upon induction of focal adhesions and stress-fiber formation. Interacts with ACTN1. Interacts with CTTN; this interaction stimulates the intrinsic GTPase activity of DNM2 and stabilizes the association of DNM2 and actin filaments; in addition this interaction is stimulated by ligand binding to the receptor, leading to the recruitment of the DNM2-CTTN complex to the sequestered receptor-ligand complex to its internalization. Interacts with NOSTRIN (via SH3 domain); this interaction allows the recruitment of NOS3 to dynamin-positive structures. Interacts (via C-terminal proline-rich domain (PRD)) with SH3BP4 (via SH3 domain); this interaction controls the GTPase activity and is prevented by EGFR-induced tyrosine phosphorylation of either DNM2 or SH3BP4. Interacts with MYO1E (via SH3 domain). Interacts with TUBG1; this interaction may participate in centrosome cohesion. Post-translationally, phosphorylation at Ser-848 by GSK3-alpha relieves the inhibition of BIN1 and promotes endocytosis. Phosphorylation at Ser-764 by CDK1 is greatly increased upon mitotic entry. It regulates cytokinesis downstream of calcineurin, and does not affect clathrin-mediated endocytosis. Dephosphorylated by calcineurin/PP2 during cytokinesis in a Ca(2+)- and calmodulin-dependent manner. Phosphorylated on tyrosine residues by EGFR. Phosphorylated on tyrosine residues after activation of SRC. As to expression, ubiquitously expressed. Brain expression is restricted to glial cells and fibroblasts. Highest levels in the testis.

It localises to the cytoplasm. Its subcellular location is the cytoskeleton. The protein localises to the cytoplasmic vesicle. The protein resides in the clathrin-coated vesicle. It is found in the cell projection. It localises to the uropodium. Its subcellular location is the endosome. The protein localises to the microtubule organizing center. The protein resides in the centrosome. It is found in the centriole. It localises to the recycling endosome. Its subcellular location is the phagocytic cup. The protein localises to the phagosome membrane. The protein resides in the podosome. It is found in the cell junction. It localises to the postsynaptic density. Its subcellular location is the synapse. The protein localises to the synaptosome. The protein resides in the midbody. It is found in the membrane. It localises to the clathrin-coated pit. Its subcellular location is the cell membrane. The enzyme catalyses GTP + H2O = GDP + phosphate + H(+). Catalyzes the hydrolysis of GTP and utilizes this energy to mediate vesicle scission at plasma membrane during endocytosis and filament remodeling at many actin structures during organization of the actin cytoskeleton. Plays an important role in vesicular trafficking processes, namely clathrin-mediated endocytosis (CME), exocytic and clathrin-coated vesicle from the trans-Golgi network, and PDGF stimulated macropinocytosis. During vesicular trafficking process, associates to the membrane, through lipid binding, and self-assembles into ring-like structure through oligomerization to form a helical polymer around the vesicle membrane and leading to vesicle scission. Plays a role in organization of the actin cytoskeleton by mediating arrangement of stress fibers and actin bundles in podocytes. During organization of the actin cytoskeleton, self-assembles into ring-like structure that directly bundles actin filaments to form typical membrane tubules decorated with dynamin spiral polymers. Self-assembly increases GTPase activity and the GTP hydrolysis causes the rapid depolymerization of dynamin spiral polymers, and results in dispersion of actin bundles. Remodels, through its interaction with CTTN, bundled actin filaments in a GTPase-dependent manner and plays a role in orchestrating the global actomyosin cytoskeleton. The interaction with CTTN stabilizes the interaction of DNM2 and actin filaments and stimulates the intrinsic GTPase activity that results in actin filament-barbed ends and increases the sensitivity of filaments in bundles to the actin depolymerizing factor, CFL1. Plays a role in the autophagy process, by participating in the formation of ATG9A vesicles destined for the autophagosomes through its interaction with SNX18, by mediating recycling endosome scission leading to autophagosome release through MAP1LC3B interaction and by regulating maturation of apoptotic cell corpse-containing phagosomes by recruiting PIK3C3 to the phagosome membrane. Also plays a role in cytokinesis. May participate in centrosome cohesion through its interaction with TUBG1. Plays a role in the regulation of neuron morphology, axon growth and formation of neuronal growth cones. Involved in membrane tubulation. This is Dynamin-2 from Rattus norvegicus (Rat).